The sequence spans 171 residues: Protein-export protein SecB (171 aa).

The protein belongs to the SecB family. In terms of assembly, homotetramer, a dimer of dimers. One homotetramer interacts with 1 SecA dimer.

The protein resides in the cytoplasm. Its function is as follows. One of the proteins required for the normal export of preproteins out of the cell cytoplasm. It is a molecular chaperone that binds to a subset of precursor proteins, maintaining them in a translocation-competent state. It also specifically binds to its receptor SecA. This is Protein-export protein SecB from Jannaschia sp. (strain CCS1).